We begin with the raw amino-acid sequence, 96 residues long: uncharacterized protein (96 aa).

Residues 35 to 96 form a disordered region; it reads SPSGEKRSTK…KKFSSPPHPK (62 aa). Residues 38 to 52 are compositionally biased toward basic and acidic residues; sequence GEKRSTKNQTKENTK. Polar residues predominate over residues 69 to 80; the sequence is ANQQTNENSKPL.

This is an uncharacterized protein from Dictyostelium discoideum (Social amoeba).